The following is a 465-amino-acid chain: Putative adhesin P1-like protein MPN_286 (465 aa).

3 disordered regions span residues 9-48 (GNGH…STFS), 59-78 (QGTL…PKWP), and 93-167 (WRND…LPPN). Residues 21 to 37 (SNSSTSGVTTQGQQSQN) show a composition bias toward low complexity. The span at 38 to 48 (ASGTEPASTFS) shows a compositional bias: polar residues. Positions 111–131 (TSATGSGQQGSSSGTTNSAGN) are enriched in low complexity. Over residues 135 to 144 (LKQDKVDKSG) the composition is skewed to basic and acidic residues. Over residues 145–156 (DSVTVAETTSGD) the composition is skewed to polar residues. Residues 157–167 (NLTNYTNLPPN) show a composition bias toward low complexity.

The protein belongs to the adhesin P1 family.

This Mycoplasma pneumoniae (strain ATCC 29342 / M129 / Subtype 1) (Mycoplasmoides pneumoniae) protein is Putative adhesin P1-like protein MPN_286.